Reading from the N-terminus, the 262-residue chain is tRNA pseudouridine synthase A (262 aa).

D54 acts as the Nucleophile in catalysis. Y113 serves as a coordination point for substrate.

It belongs to the tRNA pseudouridine synthase TruA family. In terms of assembly, homodimer.

The catalysed reaction is uridine(38/39/40) in tRNA = pseudouridine(38/39/40) in tRNA. Formation of pseudouridine at positions 38, 39 and 40 in the anticodon stem and loop of transfer RNAs. This chain is tRNA pseudouridine synthase A, found in Lactobacillus delbrueckii subsp. bulgaricus (strain ATCC BAA-365 / Lb-18).